Consider the following 287-residue polypeptide: Pyridoxal 5'-phosphate synthase subunit PdxS (287 aa).

D21 is a binding site for D-ribose 5-phosphate. K78 (schiff-base intermediate with D-ribose 5-phosphate) is an active-site residue. A D-ribose 5-phosphate-binding site is contributed by G150. A D-glyceraldehyde 3-phosphate-binding site is contributed by R162. D-ribose 5-phosphate is bound by residues G211 and 232–233; that span reads GS.

It belongs to the PdxS/SNZ family. In the presence of PdxT, forms a dodecamer of heterodimers.

It catalyses the reaction aldehydo-D-ribose 5-phosphate + D-glyceraldehyde 3-phosphate + L-glutamine = pyridoxal 5'-phosphate + L-glutamate + phosphate + 3 H2O + H(+). It functions in the pathway cofactor biosynthesis; pyridoxal 5'-phosphate biosynthesis. Functionally, catalyzes the formation of pyridoxal 5'-phosphate from ribose 5-phosphate (RBP), glyceraldehyde 3-phosphate (G3P) and ammonia. The ammonia is provided by the PdxT subunit. Can also use ribulose 5-phosphate and dihydroxyacetone phosphate as substrates, resulting from enzyme-catalyzed isomerization of RBP and G3P, respectively. The chain is Pyridoxal 5'-phosphate synthase subunit PdxS from Francisella philomiragia subsp. philomiragia (strain ATCC 25017 / CCUG 19701 / FSC 153 / O#319-036).